Here is a 1383-residue protein sequence, read N- to C-terminus: NPC intracellular cholesterol transporter 1 homolog 1 (1383 aa).

The signal sequence occupies residues 1 to 20 (MKQLLIFCLLFGSIFHHGDA). 8 disulfide bridges follow: cysteine 22-cysteine 76, cysteine 28-cysteine 39, cysteine 65-cysteine 111, cysteine 77-cysteine 115, cysteine 99-cysteine 246, cysteine 102-cysteine 167, cysteine 182-cysteine 187, and cysteine 235-cysteine 251. The N-linked (GlcNAc...) asparagine glycan is linked to asparagine 42. Asparagine 231 carries an N-linked (GlcNAc...) asparagine glycan. Helical transmembrane passes span 282–302 (IFVM…GFVF) and 353–373 (PKSH…GMIY). N-linked (GlcNAc...) asparagine glycosylation occurs at asparagine 447. Disulfide bonds link cysteine 464/cysteine 474 and cysteine 526/cysteine 541. Asparagine 558 carries an N-linked (GlcNAc...) asparagine glycan. The next 6 helical transmembrane spans lie at 627–647 (EIVT…FSLG), 665–685 (ICLG…SWGI), 697–717 (ALVV…FMVV), 746–766 (TMPA…IGGF), 780–800 (GLAV…LFVW), and 856–876 (IITG…SSKI). In terms of domain architecture, SSD spans 627-800 (EIVTVVIALA…CTIFLALFVW (174 aa)). Cystine bridges form between cysteine 929-cysteine 934, cysteine 976-cysteine 1046, cysteine 977-cysteine 1005, and cysteine 988-cysteine 1002. Asparagine 993 and asparagine 1082 each carry an N-linked (GlcNAc...) asparagine glycan. The next 5 helical transmembrane spans lie at 1126–1146 (IMPI…GIIC), 1157–1177 (ACAV…MYIF), 1179–1199 (IPVN…LIEF), 1226–1246 (IGPI…MFLS), and 1260–1280 (LFLI…PILL).

Belongs to the patched family.

The protein localises to the membrane. The enzyme catalyses cholesterol(in) = cholesterol(out). Involved in the uptake or utilization of cholesterol. Ncr-1 and ncr-2 act redundantly to prevent dauer larva formation under favorable growth conditions, and are required for the normal functioning of ADF, ASI and ASG neurons. The protein is NPC intracellular cholesterol transporter 1 homolog 1 of Caenorhabditis elegans.